Consider the following 530-residue polypeptide: MSATKSIVGEALEYVNIGLSHFLALPLAQRISLIIIIPFIYNIVWQLLYSLRKDRPPLVFYWIPWVGSAVVYGMKPYEFFEECQKKYGDIFSFVLLGRVMTVYLGPKGHEFVFNAKLADVSAEAAYAHLTTPVFGKGVIYDCPNSRLMEQKKFVKGALTKEAFKSYVPLIAEEVYKYFRDSKNFRLNERTTGTIDVMVTQPEMTIFTASRSLLGKEMRAKLDTDFAYLYSDLDKGFTPINFVFPNLPLEHYRKRDHAQKAISGTYMSLIKERRKNNDIQDRDLIDSLMKNSTYKDGVKMTDQEIANLLIGVLMGGQHTSAATSAWILLHLAERPDVQQELYEEQMRVLDGGKKELTYDLLQEMPLLNQTIKETLRMHHPLHSLFRKVMKDMHVPNTSYVIPAGYHVLVSPGYTHLRDEYFPNAHQFNIHRWNKDSASSYSVGEEVDYGFGAISKGVSSPYLPFGGGRHRCIGEHFAYCQLGVLMSIFIRTLKWHYPEGKTVPPPDFTSMVTLPTGPAKIIWEKRNPEQKI.

Residues 1–20 are Lumenal-facing; that stretch reads MSATKSIVGEALEYVNIGLS. Residues 21-41 traverse the membrane as a helical segment; that stretch reads HFLALPLAQRISLIIIIPFIY. Topologically, residues 42 to 530 are cytoplasmic; that stretch reads NIVWQLLYSL…WEKRNPEQKI (489 aa). Lysine 116 is covalently cross-linked (Glycyl lysine isopeptide (Lys-Gly) (interchain with G-Cter in ubiquitin)). Tyrosine 126 provides a ligand contact to lanosterol. Position 314 (glycine 314) interacts with itraconazole. Residues lysine 353 and lysine 454 each participate in a glycyl lysine isopeptide (Lys-Gly) (interchain with G-Cter in ubiquitin) cross-link. Position 458 is a phosphoserine (serine 458). Heme is bound at residue cysteine 470.

This sequence belongs to the cytochrome P450 family. As to quaternary structure, interacts with ERG28. It depends on heme as a cofactor.

It localises to the endoplasmic reticulum membrane. The enzyme catalyses a 14alpha-methyl steroid + 3 reduced [NADPH--hemoprotein reductase] + 3 O2 = a Delta(14) steroid + formate + 3 oxidized [NADPH--hemoprotein reductase] + 4 H2O + 4 H(+). It catalyses the reaction a 14alpha-methyl steroid + reduced [NADPH--hemoprotein reductase] + O2 = a 14alpha-hydroxymethyl steroid + oxidized [NADPH--hemoprotein reductase] + H2O + H(+). The catalysed reaction is a 14alpha-hydroxymethyl steroid + reduced [NADPH--hemoprotein reductase] + O2 = a 14alpha-formyl steroid + oxidized [NADPH--hemoprotein reductase] + 2 H2O + H(+). It carries out the reaction a 14alpha-formyl steroid + reduced [NADPH--hemoprotein reductase] + O2 = a Delta(14) steroid + formate + oxidized [NADPH--hemoprotein reductase] + H2O + 2 H(+). The enzyme catalyses lanosterol + 3 reduced [NADPH--hemoprotein reductase] + 3 O2 = 4,4-dimethyl-5alpha-cholesta-8,14,24-trien-3beta-ol + formate + 3 oxidized [NADPH--hemoprotein reductase] + 4 H2O + 4 H(+). It catalyses the reaction lanosterol + reduced [NADPH--hemoprotein reductase] + O2 = 32-hydroxylanosterol + oxidized [NADPH--hemoprotein reductase] + H2O + H(+). The catalysed reaction is 32-hydroxylanosterol + reduced [NADPH--hemoprotein reductase] + O2 = 32-oxolanosterol + oxidized [NADPH--hemoprotein reductase] + 2 H2O + H(+). It carries out the reaction 32-oxolanosterol + reduced [NADPH--hemoprotein reductase] + O2 = 4,4-dimethyl-5alpha-cholesta-8,14,24-trien-3beta-ol + formate + oxidized [NADPH--hemoprotein reductase] + H2O + 2 H(+). It participates in steroid biosynthesis; zymosterol biosynthesis; zymosterol from lanosterol: step 1/6. Its function is as follows. Sterol 14alpha-demethylase that plays a critical role in the third module of ergosterol biosynthesis pathway, being ergosterol the major sterol component in fungal membranes that participates in a variety of functions. The third module or late pathway involves the ergosterol synthesis itself through consecutive reactions that mainly occur in the endoplasmic reticulum (ER) membrane. Starting from lanosterol (lanosta-8,24-dien-3beta-ol), it catalyzes the three-step oxidative removal of the 14alpha-methyl group (C-32) of the sterol in the form of formate, and converts the sterol to 4,4-dimethyl-5alpha-cholesta-8,14,24-trien-3beta-ol, which is critical for ergosterol biosynthesis. Can demethylate substrates not intrinsic to yeast, such as eburicol (24-methylene-24,25-dihydrolanosterol) at a similar rate to lanosterol, and at a lower rate the 24,25-dihydrolanosterol (DHL) to 4,4-dimethyl-8,14-cholestadien-3beta-ol. This Saccharomyces cerevisiae (strain ATCC 204508 / S288c) (Baker's yeast) protein is Lanosterol 14-alpha demethylase CYP51.